Here is a 333-residue protein sequence, read N- to C-terminus: NADH-ubiquinone oxidoreductase chain 2 (333 aa).

10 helical membrane passes run 10–30 (WFIY…NIFI), 57–77 (LIYY…IIVY), 91–111 (FMVQ…FWMI), 121–141 (QIFL…VSMT), 143–163 (INSW…FYAN), 170–190 (KLLA…LELN), 192–212 (NMFI…ISFL), 242–262 (MYPI…MVSV), 267–287 (WILF…IIIL), and 313–333 (SYFA…LNFL).

This sequence belongs to the complex I subunit 2 family.

Its subcellular location is the mitochondrion inner membrane. It carries out the reaction a ubiquinone + NADH + 5 H(+)(in) = a ubiquinol + NAD(+) + 4 H(+)(out). Core subunit of the mitochondrial membrane respiratory chain NADH dehydrogenase (Complex I) that is believed to belong to the minimal assembly required for catalysis. Complex I functions in the transfer of electrons from NADH to the respiratory chain. The immediate electron acceptor for the enzyme is believed to be ubiquinone. This is NADH-ubiquinone oxidoreductase chain 2 (ND2) from Apis mellifera ligustica (Common honeybee).